Here is a 383-residue protein sequence, read N- to C-terminus: 8-amino-7-oxononanoate synthase (383 aa).

Arg-21 contacts substrate. 108–109 (GY) contributes to the pyridoxal 5'-phosphate binding site. His-133 contacts substrate. Residues Ser-179, His-207, and Thr-233 each coordinate pyridoxal 5'-phosphate. Position 236 is an N6-(pyridoxal phosphate)lysine (Lys-236). Thr-350 lines the substrate pocket.

It belongs to the class-II pyridoxal-phosphate-dependent aminotransferase family. BioF subfamily. In terms of assembly, homodimer. Pyridoxal 5'-phosphate serves as cofactor.

It carries out the reaction 6-carboxyhexanoyl-[ACP] + L-alanine + H(+) = (8S)-8-amino-7-oxononanoate + holo-[ACP] + CO2. It participates in cofactor biosynthesis; biotin biosynthesis. Its function is as follows. Catalyzes the decarboxylative condensation of pimeloyl-[acyl-carrier protein] and L-alanine to produce 8-amino-7-oxononanoate (AON), [acyl-carrier protein], and carbon dioxide. The protein is 8-amino-7-oxononanoate synthase of Serratia proteamaculans (strain 568).